The sequence spans 284 residues: Bifunctional protein FolD (284 aa).

Residues G166–S168, S191, and I232 each bind NADP(+).

This sequence belongs to the tetrahydrofolate dehydrogenase/cyclohydrolase family. As to quaternary structure, homodimer.

It carries out the reaction (6R)-5,10-methylene-5,6,7,8-tetrahydrofolate + NADP(+) = (6R)-5,10-methenyltetrahydrofolate + NADPH. The catalysed reaction is (6R)-5,10-methenyltetrahydrofolate + H2O = (6R)-10-formyltetrahydrofolate + H(+). The protein operates within one-carbon metabolism; tetrahydrofolate interconversion. In terms of biological role, catalyzes the oxidation of 5,10-methylenetetrahydrofolate to 5,10-methenyltetrahydrofolate and then the hydrolysis of 5,10-methenyltetrahydrofolate to 10-formyltetrahydrofolate. This Neisseria meningitidis serogroup C (strain 053442) protein is Bifunctional protein FolD.